Reading from the N-terminus, the 132-residue chain is Glycine cleavage system H protein (132 aa).

The region spanning 24–106 is the Lipoyl-binding domain; that stretch reads RVRVGITDYA…YGAGWLFELE (83 aa). At Lys65 the chain carries N6-lipoyllysine.

The protein belongs to the GcvH family. As to quaternary structure, the glycine cleavage system is composed of four proteins: P, T, L and H. The cofactor is (R)-lipoate.

The glycine cleavage system catalyzes the degradation of glycine. The H protein shuttles the methylamine group of glycine from the P protein to the T protein. The protein is Glycine cleavage system H protein of Nocardia farcinica (strain IFM 10152).